The sequence spans 339 residues: Geranylgeranyl transferase type-2 subunit beta (339 aa).

The residue at position 11 (T11) is a Phosphothreonine. PFTB repeat units lie at residues 28–69 (LEKH…DLMG), 76–117 (REEI…TLYD), 124–165 (VDKV…ALLG), 172–213 (VEKA…AITS), 220–261 (SDLL…KIIG), and 268–310 (REKL…SLLG). Residues 198 to 200 (HAG) and 240 to 243 (RPEK) contribute to the geranylgeranyl diphosphate site. 2 residues coordinate Zn(2+): D246 and C248. Geranylgeranyl diphosphate-binding positions include Y249 and 249–252 (YSWW). H298 contacts Zn(2+).

This sequence belongs to the protein prenyltransferase subunit beta family. Heterotrimer composed of RABGGTA, RABGGTB and CHM; within this trimer, RABGGTA and RABGGTB form the catalytic component B, while CHM (component A) mediates peptide substrate binding. The Rab GGTase dimer (RGGT) interacts with CHM (component A) prior to Rab protein binding; the association is stabilized by geranylgeranyl pyrophosphate (GGpp). The CHM:RGGT:Rab complex is destabilized by GGpp. Interaction of RABGGTB with prenylated PTP4A2 precludes its association with RABGGTA and inhibits enzyme activity. Interacts with CHODL. Interacts with non-phosphorylated form of RAB8A; phosphorylation of RAB8A at 'Thr-72' disrupts this interaction. Zn(2+) serves as cofactor. In terms of tissue distribution, ubiquitous. Detected in all the major organs in adult animals.

The enzyme catalyses geranylgeranyl diphosphate + L-cysteinyl-[protein] = S-geranylgeranyl-L-cysteinyl-[protein] + diphosphate. With respect to regulation, the enzymatic reaction requires the aid of a Rab escort protein (also called component A), such as CHM. Its function is as follows. Catalyzes the transfer of a geranylgeranyl moiety from geranylgeranyl diphosphate to both cysteines of Rab proteins with the C-terminal sequence -XXCC, -XCXC and -CCXX, such as RAB1A, RAB3A, RAB5A and RAB7A. This is Geranylgeranyl transferase type-2 subunit beta (Rabggtb) from Mus musculus (Mouse).